The sequence spans 278 residues: 4-deoxy-L-threo-5-hexosulose-uronate ketol-isomerase (278 aa).

Zn(2+)-binding residues include H196, H198, E203, and H245.

This sequence belongs to the KduI family. The cofactor is Zn(2+).

The catalysed reaction is 5-dehydro-4-deoxy-D-glucuronate = 3-deoxy-D-glycero-2,5-hexodiulosonate. The protein operates within glycan metabolism; pectin degradation; 2-dehydro-3-deoxy-D-gluconate from pectin: step 4/5. Catalyzes the isomerization of 5-dehydro-4-deoxy-D-glucuronate to 3-deoxy-D-glycero-2,5-hexodiulosonate. This Salmonella dublin (strain CT_02021853) protein is 4-deoxy-L-threo-5-hexosulose-uronate ketol-isomerase.